Here is a 329-residue protein sequence, read N- to C-terminus: UDP-2,3-diacylglucosamine pyrophosphatase LpxG (329 aa).

The chain crosses the membrane as a helical span at residues Phe-2–Trp-24. Residues Asp-59, His-61, Asp-91, Asn-123, His-257, and His-259 each coordinate a divalent metal cation.

The protein belongs to the metallophosphoesterase superfamily. LpxG family. Requires Mn(2+) as cofactor.

The protein resides in the cell inner membrane. It carries out the reaction UDP-2,3-diacyl-alpha-D-glucosamine + H2O = 2,3-diacyl-alpha-D-glucosaminyl 1-phosphate + UMP + 2 H(+). The protein operates within glycolipid biosynthesis; lipid IV(A) biosynthesis. Functionally, hydrolyzes the pyrophosphate bond of UDP-2,3-diacylglucosamine to form 2,3-diacylglucosamine 1-phosphate (lipid X) and UMP by catalyzing the attack of water at the alpha-P atom. Involved in the biosynthesis of lipid A, a phosphorylated glycolipid that anchors the lipooligosaccharide (LOS) to the outer membrane of the cell. Can functionally complement lpxH deficiency in E.coli. Overexpression of LpxG results in toxic accumulation of lipid X and profoundly reduces the infectivity of C.trachomatis. Can utilize UDP-2-N,3-O-bis((3R)-3-hydroxytetradecanoyl)-alpha-D-glucosamine as substrate in vitro, but the substrate is likely UDP-2-N-((3R)-3-hydroxyicosanoyl),3-O-(tetradecanoyl)-alpha-D-glucosamine in vivo. This Chlamydia trachomatis serovar D (strain ATCC VR-885 / DSM 19411 / UW-3/Cx) protein is UDP-2,3-diacylglucosamine pyrophosphatase LpxG.